Here is a 327-residue protein sequence, read N- to C-terminus: COP9 signalosome complex subunit 5 (327 aa).

Residues 52–189 (IKISALALLK…LGAFRTYPKG (138 aa)) form the MPN domain. Residues His135, His137, and Asp148 each coordinate Zn(2+). The JAMM motif motif lies at 135–148 (HSHPGYGCWLSGID). Phosphoserine occurs at positions 300 and 302. The residue at position 303 (Thr303) is a Phosphothreonine.

This sequence belongs to the peptidase M67A family. CSN5 subfamily. In terms of assembly, component of the CSN complex, probably composed of CSN1b, alien/CSN2, CSN3, CSN4, CSN5, CSN6, CSN7 and CSN8. Interacts directly with CSN2. Also exists as monomeric form. Interacts via its MPN domain with Trc8. A divalent metal cation serves as cofactor. In terms of tissue distribution, expressed in the optic lobe neuropil.

It localises to the cytoplasm. It is found in the nucleus. Functionally, probable protease subunit of the COP9 signalosome complex (CSN), a complex involved in various cellular and developmental processes. The CSN complex is an essential regulator of the ubiquitin (Ubl) conjugation pathway by mediating the deneddylation of the cullin subunits of the SCF-type E3 ligase complexes, leading to decrease the Ubl ligase activity of SCF. In the complex, it probably acts as the catalytic center that mediates the cleavage of Nedd8 from cullins. It however has no metalloprotease activity by itself and requires the other subunits of the CSN complex. The CSN complex plays an essential role in oogenesis and embryogenesis and is required for proper photoreceptor R cell differentiation and promote lamina glial cell migration or axon targeting. It also promotes Ubl-dependent degradation of cyclin E (CycE) during early oogenesis. Also involved in regulation of axis formation by checkpoint-dependent, translational control of Gurken. This Drosophila melanogaster (Fruit fly) protein is COP9 signalosome complex subunit 5 (CSN5).